The following is a 206-amino-acid chain: MKSVGNLSPNTSLLFICDIQSKFENHIFKFNDVVGQSKYMIKICNELKVPIIFTEQYPKGLGHTVEDLLKERNENNQTKIFEKTLYSMCTNEVLNHLKQNHKDLKSILITGIETHVCVLQSTLDFLENGYDVHILSDAVSSNNNNDRLIALERMRQSGAFITTTETITFQLTKDAKHKSFKNIVPLSQERREYLLANPSLSSLSKL.

Belongs to the isochorismatase family.

The chain is Isochorismatase family protein 1A from Dictyostelium discoideum (Social amoeba).